The primary structure comprises 268 residues: MSNFQHGNYHSYYSMRGGTSIIDPRLKCLPDSLFYEASVLDIGCNNGTVSAQIASIFGASFVLGLDIDHVLIQKARKHLEFVSSRIGPVRNPGSIVEDQFNYYPISSIKKFSRIPVQLQPPLNKQNFPHNIEFETADFLRWESKRKFKIILALSVSKWVHLNNHDEGIIKFFGKISSLLETNGVLILEPQGWDSYLKAAKKISVFNQTPENLKIQPDAFEHLLNQAGLVLEYSIEPQVNNSEYKNFAKRTMYIYKKKGIGIIKLLTST.

Residues 23-258 form the Bin3-type SAM domain; the sequence is DPRLKCLPDS…RTMYIYKKKG (236 aa).

Belongs to the methyltransferase superfamily.

Its function is as follows. Probable RNA methyltransferase. This Schizosaccharomyces pombe (strain 972 / ATCC 24843) (Fission yeast) protein is Probable RNA methyltransferase C2A9.10.